The sequence spans 215 residues: Ribosomal RNA small subunit methyltransferase G (215 aa).

Residues Gly77, Phe82, 130-131, and Arg146 contribute to the S-adenosyl-L-methionine site; that span reads IE.

It belongs to the methyltransferase superfamily. RNA methyltransferase RsmG family.

Its subcellular location is the cytoplasm. It carries out the reaction guanosine(527) in 16S rRNA + S-adenosyl-L-methionine = N(7)-methylguanosine(527) in 16S rRNA + S-adenosyl-L-homocysteine. Functionally, specifically methylates the N7 position of guanine in position 527 of 16S rRNA. In Bartonella henselae (strain ATCC 49882 / DSM 28221 / CCUG 30454 / Houston 1) (Rochalimaea henselae), this protein is Ribosomal RNA small subunit methyltransferase G.